We begin with the raw amino-acid sequence, 113 residues long: Nucleoid-associated protein RHA1_ro04210 (113 aa).

It belongs to the YbaB/EbfC family. As to quaternary structure, homodimer.

Its subcellular location is the cytoplasm. It is found in the nucleoid. Its function is as follows. Binds to DNA and alters its conformation. May be involved in regulation of gene expression, nucleoid organization and DNA protection. This is Nucleoid-associated protein RHA1_ro04210 from Rhodococcus jostii (strain RHA1).